Here is a 126-residue protein sequence, read N- to C-terminus: Adenosine 5'-monophosphoramidase HINT1 (126 aa).

Residue alanine 2 is modified to N-acetylalanine. Residues isoleucine 18–glycine 126 enclose the HIT domain. An N6-acetyllysine mark is found at lysine 21 and lysine 30. Residue aspartate 43–isoleucine 44 coordinates AMP. 2 positions are modified to phosphoserine: serine 45 and serine 72. AMP is bound by residues asparagine 99, glycine 105–serine 107, and histidine 112–histidine 114. The Histidine triad motif motif lies at histidine 110–histidine 114. Histidine 112 (tele-AMP-histidine intermediate) is an active-site residue.

The protein belongs to the HINT family. Homodimer. Interacts with CDK7. Interacts with RUVBL1 and RUVBL2 and is associated with the LEF1/TCF1-CTNNB1 complex and with a KAT5 histone acetyltransferase complex. Identified in a complex with MITF and CTNNB1. Interacts with CDC34 and RBX1, and is part of a SCF (SKP2-CUL1-F-box protein) E3 ubiquitin-protein ligase complex. Interacts with SUMO1, SUMO2 and RGS17. Interacts with the Ten-1 ICD form of TENM1. Interacts with CALM1; interaction increases in the presence of calcium ions. In terms of tissue distribution, widely expressed.

It localises to the cytoplasm. It is found in the nucleus. The catalysed reaction is adenosine 5'-phosphoramidate + H2O = AMP + NH4(+). Exhibits adenosine 5'-monophosphoramidase activity, hydrolyzing purine nucleotide phosphoramidates with a single phosphate group such as adenosine 5'monophosphoramidate (AMP-NH2) to yield AMP and NH2. Hydrolyzes adenosine 5'monophosphomorpholidate (AMP-morpholidate) and guanosine 5'monophosphomorpholidate (GMP-morpholidate). Hydrolyzes lysyl-AMP (AMP-N-epsilon-(N-alpha-acetyl lysine methyl ester)) generated by lysine tRNA ligase, as well as Met-AMP, His-AMP and Asp-AMP, lysyl-GMP (GMP-N-epsilon-(N-alpha-acetyl lysine methyl ester)) and AMP-N-alanine methyl ester. Hydrolyzes 3-indolepropionic acyl-adenylate, tryptamine adenosine phosphoramidate monoester and other fluorogenic purine nucleoside tryptamine phosphoramidates in vitro. Can also convert adenosine 5'-O-phosphorothioate and guanosine 5'-O-phosphorothioate to the corresponding nucleoside 5'-O-phosphates with concomitant release of hydrogen sulfide. In addition, functions as scaffolding protein that modulates transcriptional activation by the LEF1/TCF1-CTNNB1 complex and by the complex formed with MITF and CTNNB1. Modulates p53/TP53 levels and p53/TP53-mediated apoptosis. Modulates proteasomal degradation of target proteins by the SCF (SKP2-CUL1-F-box protein) E3 ubiquitin-protein ligase complex. Also exhibits SUMO-specific isopeptidase activity, deconjugating SUMO1 from RGS17. Deconjugates SUMO1 from RANGAP1. The sequence is that of Adenosine 5'-monophosphoramidase HINT1 (HINT1) from Homo sapiens (Human).